The chain runs to 130 residues: Small ribosomal subunit protein uS9 (130 aa).

The protein belongs to the universal ribosomal protein uS9 family.

In Caldicellulosiruptor bescii (strain ATCC BAA-1888 / DSM 6725 / KCTC 15123 / Z-1320) (Anaerocellum thermophilum), this protein is Small ribosomal subunit protein uS9.